The primary structure comprises 179 residues: ATP-dependent protease subunit HslV (179 aa).

Thr7 is a catalytic residue. Na(+) is bound by residues Gly162, Cys165, and Thr168.

Belongs to the peptidase T1B family. HslV subfamily. A double ring-shaped homohexamer of HslV is capped on each side by a ring-shaped HslU homohexamer. The assembly of the HslU/HslV complex is dependent on binding of ATP.

It is found in the cytoplasm. It carries out the reaction ATP-dependent cleavage of peptide bonds with broad specificity.. Allosterically activated by HslU binding. In terms of biological role, protease subunit of a proteasome-like degradation complex believed to be a general protein degrading machinery. This is ATP-dependent protease subunit HslV from Bordetella bronchiseptica (strain ATCC BAA-588 / NCTC 13252 / RB50) (Alcaligenes bronchisepticus).